We begin with the raw amino-acid sequence, 56 residues long: UPF0434 protein Ecaj_0131 (56 aa).

It belongs to the UPF0434 family.

The protein is UPF0434 protein Ecaj_0131 of Ehrlichia canis (strain Jake).